We begin with the raw amino-acid sequence, 416 residues long: MAPPASTASSADPSKPTAQKLTEESDEKTLRKYFSTKVDDAQQKVADKSQNVRRLQAQRNELNTKVRMLKEELQQLHEQGSYVGEVSKAMDKKKVLVKVHPEGKYVVDVDKSIDINSLNTGARVALRADSYALHKLLPNKVDPLVSLMMVEKVPDSTYEMVGGLDKQIKEIKEVIELPVKHPELFDALGIAQPKGVLLFGPPGTGKTLLARAVAHHTECTFIRVSGSELVQKFIGEGARMVRELFVMAREHAPSIIFMDEIDSIGSSRVEGSSGGDSEVQRTMLELLNQLDGFEATKNIKVIMATNRIDILDPALLRPGRIDRKIEFPAPDEKARADILKIHSRKMNLMRGINMAKIAEQIPGASGAEVKSVCTEAGMFALRERRIHVTQEDFEMAVGKVMQKDSEKNMSIKKLWK.

The span at 1-18 (MAPPASTASSADPSKPTA) shows a compositional bias: low complexity. A disordered region spans residues 1–29 (MAPPASTASSADPSKPTAQKLTEESDEKT). 200–207 (GPPGTGKT) serves as a coordination point for ATP.

The protein belongs to the AAA ATPase family. Component of the 19S proteasome regulatory particle complex. The 26S proteasome consists of a 20S core particle (CP) and two 19S regulatory subunits (RP). Interacts with elt-2.

It is found in the cytoplasm. It localises to the nucleus. Its function is as follows. Component of the 26S proteasome, a multiprotein complex involved in the ATP-dependent degradation of ubiquitinated proteins. This complex plays a key role in the maintenance of protein homeostasis by removing misfolded or damaged proteins, which could impair cellular functions, and by removing proteins whose functions are no longer required. Therefore, the proteasome participates in numerous cellular processes, including cell cycle progression, apoptosis, or DNA damage repair. Belongs to the heterohexameric ring of AAA (ATPases associated with diverse cellular activities) proteins that unfolds ubiquitinated target proteins that are concurrently translocated into a proteolytic chamber and degraded into peptides. In addition, regulates gene expression in response to bacterial infection. Binds to the GATA transcription factor elt-2 to control its transcriptional activity and thus the expression of elt-2-dependent genes in response to infection by Gram-negative bacteria such as P.aeruginosa. This chain is 26S proteasome regulatory subunit 8, found in Caenorhabditis elegans.